A 130-amino-acid chain; its full sequence is Putative ankyrin repeat protein R886 (130 aa).

ANK repeat units follow at residues 21 to 50, 54 to 83, and 85 to 113; these read NYDR…DITA, YGFT…SIIK, and DNLT…DIRY.

This is Putative ankyrin repeat protein R886 from Acanthamoeba polyphaga (Amoeba).